A 1503-amino-acid polypeptide reads, in one-letter code: Mitogen-activated protein kinase-binding protein 1 (1503 aa).

12 WD repeats span residues 89 to 130 (SSRK…QVAE), 133 to 174 (EHKY…VVAS), 176 to 214 (KVSS…TSKV), 271 to 310 (VELR…FLST), 337 to 376 (ARYP…KVGK), 382 to 431 (YHSS…VHGS), 472 to 511 (DPRV…EMLK), 514 to 556 (AHDS…SLQQ), 560 to 601 (EHSS…EGVQ), 609 to 648 (VRKT…QKKL), 654 to 693 (GEDG…CVAT), and 696 to 735 (GHSE…TISM). Disordered regions lie at residues 745 to 817 (RQRG…SSPA), 874 to 917 (LAPS…RLQT), and 951 to 1176 (VYPE…SWAS). The segment covering 784–796 (KEGEDEGTEEEEL) has biased composition (acidic residues). Polar residues-rich tracts occupy residues 905 to 917 (CVSQ…RLQT) and 957 to 972 (DSPT…QAPT). Acidic residues predominate over residues 1028 to 1043 (DLEEPAEGDEDEEEEG). Over residues 1058–1068 (PDQEQFLKQHF) the composition is skewed to basic and acidic residues. Polar residues predominate over residues 1089-1129 (SQSISSRFLLQVQTSPLREPSLSSSGLALTSRPDQVSQVSG). Phosphoserine is present on serine 1193. Disordered regions lie at residues 1217–1238 (QGSL…SYQN) and 1369–1391 (QGPE…SSRP).

As to quaternary structure, can form homodimers (via C-terminus). Interacts (via C-terminus) with WDR62 (via C-terminus). Interacts with MAPK9. Interacts (via N-terminus) with NOD2; the interaction is enhanced in presence of muramyl dipeptide (MDP). Interacts with MAPK10. In terms of tissue distribution, ubiquitously expressed. Highest expression observed in brain.

The protein resides in the cytoplasm. Its subcellular location is the nucleus. It localises to the cytoskeleton. It is found in the spindle pole. Functionally, negative regulator of NOD2 function. It down-regulates NOD2-induced processes such as activation of NF-kappa-B signaling, IL8 secretion and antibacterial response. Involved in JNK signaling pathway. The protein is Mitogen-activated protein kinase-binding protein 1 (Mapkbp1) of Mus musculus (Mouse).